Here is a 260-residue protein sequence, read N- to C-terminus: Carbonic anhydrase 3 (260 aa).

Ala2 carries the N-acetylalanine modification. An Alpha-carbonic anhydrase domain is found at 3–259 (KEWGYASHNG…INNRVVRASF (257 aa)). Phosphoserine is present on residues Ser29, Ser43, Ser48, Ser50, and Ser55. Positions 64-67 (KTCR) are involved in proton transfer. Thr73 carries the post-translational modification Phosphothreonine. The Zn(2+) site is built by His94, His96, and His119. Tyr127 carries the phosphotyrosine modification. 2 positions are modified to phosphothreonine: Thr129 and Thr176. 2 positions are modified to S-glutathionyl cysteine: Cys182 and Cys187. 198-199 (TT) is a binding site for substrate. Thr216 is modified (phosphothreonine). Ser219 bears the Phosphoserine mark.

The protein belongs to the alpha-carbonic anhydrase family. It depends on Zn(2+) as a cofactor. S-thiolated both by thiol-disulfide exchange with glutathione disulfide and by oxyradical-initiated S-thiolation with reduced glutathione. In terms of processing, S-glutathionylated in hepatocytes under oxidative stress. In terms of tissue distribution, muscle specific.

The protein localises to the cytoplasm. It catalyses the reaction hydrogencarbonate + H(+) = CO2 + H2O. Its activity is regulated as follows. Activated by proton donors such as imidazole and the dipeptide histidylhistidine. Inhibited by coumarins and sulfonamide derivatives such as acetazolamide. Reversible hydration of carbon dioxide. The sequence is that of Carbonic anhydrase 3 from Homo sapiens (Human).